The sequence spans 762 residues: Endothelin-converting enzyme 1 (762 aa).

At 1 to 60 (MGSLRPPQGLGLQWSSFFLGKKGPGLTVSLPLLASSLQVNFRSPRSGQRCWAARTSVEKR) the chain is on the cytoplasmic side. Residues 61–81 (LVVLVTLLAAGLVACLAALGI) form a helical; Signal-anchor for type II membrane protein membrane-spanning segment. At 82–762 (QYRTRTPPVC…MNPRHKCEVW (681 aa)) the chain is on the extracellular side. The Peptidase M13 domain occupies 90–762 (VCLTEACVSV…MNPRHKCEVW (673 aa)). 5 disulfide bridges follow: Cys-91/Cys-96, Cys-114/Cys-747, Cys-122/Cys-707, Cys-177/Cys-427, and Cys-636/Cys-759. N-linked (GlcNAc...) asparagine glycans are attached at residues Asn-158, Asn-179, Asn-202, Asn-262, Asn-308, Asn-354, Asn-375, and Asn-531. Zn(2+) is bound at residue His-599. Glu-600 is a catalytic residue. His-603 contacts Zn(2+). Residues Asn-624 and Asn-643 are each glycosylated (N-linked (GlcNAc...) asparagine). Glu-659 lines the Zn(2+) pocket. The Proton donor role is filled by Asp-663.

Belongs to the peptidase M13 family. In terms of assembly, homodimer; disulfide-linked. Interacts with PPP1R16B. Interacts with TSPAN8; this interaction recruits the endothelin converting enzyme ECE1 to tetraspanin-enriched microdomains and positively modulates its enzymatic activity. Zn(2+) is required as a cofactor. As to expression, all isoforms are expressed in aortic endothelial cells. Isoform A is also expressed in liver; isoform B in smooth muscle cells and fibroblasts; isoform C in aortic endothelial cells, smooth muscle cells, fibroblasts, liver and lung, and isoform D in smooth muscle cells.

Its subcellular location is the cell membrane. It catalyses the reaction Hydrolysis of the 21-Trp-|-Val-22 bond in big endothelin to form endothelin 1.. Inhibited by phosphoramidon. Functionally, converts big endothelin-1 to endothelin-1. The sequence is that of Endothelin-converting enzyme 1 (Ece1) from Rattus norvegicus (Rat).